We begin with the raw amino-acid sequence, 337 residues long: Glyceraldehyde-3-phosphate dehydrogenase (337 aa).

Residues 12-13 (RI), Asp-36, Arg-80, and Ser-122 contribute to the NAD(+) site. D-glyceraldehyde 3-phosphate contacts are provided by residues 153-155 (SCT) and Thr-184. The Nucleophile role is filled by Cys-154. Residue Asn-185 coordinates NAD(+). D-glyceraldehyde 3-phosphate is bound by residues Arg-199, 212-213 (TG), and Arg-235. Asn-318 provides a ligand contact to NAD(+).

The protein belongs to the glyceraldehyde-3-phosphate dehydrogenase family. As to quaternary structure, homotetramer.

It is found in the cytoplasm. It carries out the reaction D-glyceraldehyde 3-phosphate + phosphate + NAD(+) = (2R)-3-phospho-glyceroyl phosphate + NADH + H(+). It participates in carbohydrate degradation; glycolysis; pyruvate from D-glyceraldehyde 3-phosphate: step 1/5. Its function is as follows. Catalyzes the oxidative phosphorylation of glyceraldehyde 3-phosphate (G3P) to 1,3-bisphosphoglycerate (BPG) using the cofactor NAD. The first reaction step involves the formation of a hemiacetal intermediate between G3P and a cysteine residue, and this hemiacetal intermediate is then oxidized to a thioester, with concomitant reduction of NAD to NADH. The reduced NADH is then exchanged with the second NAD, and the thioester is attacked by a nucleophilic inorganic phosphate to produce BPG. This chain is Glyceraldehyde-3-phosphate dehydrogenase (gap), found in Zymomonas mobilis subsp. mobilis (strain ATCC 31821 / ZM4 / CP4).